Consider the following 1382-residue polypeptide: ABC-type transporter atr1 (1382 aa).

A compositionally biased stretch (basic and acidic residues) spans 1–12; that stretch reads MRFRSDSRADHQ. Residues 1-56 are disordered; it reads MRFRSDSRADHQHPKKQGSMDPDTIQALKYQDRSSSSSSNNKPKEKVGSASTSPSP. A glycan (N-linked (GlcNAc...) asparagine) is linked at N62. 6 helical membrane-spanning segments follow: residues 101–121, 159–179, 233–253, 259–279, 339–359, and 374–394; these read LFGTGMAIAAGAAQPLMNIFI, LILLYLGIGMFFASMLYMAVF, LPMAIMYFSTFVTAAAVAFAF, LVLLPIAPLILLAGGVMGALT, GVGVGALLFIIYAGYALAFFY, and IVSVVFANFAGAFAIANLFSM. Residues 101–400 enclose the ABC transmembrane type-1 1 domain; that stretch reads LFGTGMAIAA…LFSMIENFTM (300 aa). N397 is a glycosylation site (N-linked (GlcNAc...) asparagine). The ABC transporter 1 domain maps to 445-688; that stretch reads LKLDHVHFAY…PNGTFASMLR (244 aa). 480 to 487 contacts ATP; it reads GLSGSGKS. Residue N680 is glycosylated (N-linked (GlcNAc...) asparagine). Residues 738-768 are disordered; it reads SVKPKDPSKNFEPPGESYASPAADGVKQDAP. Positions 797–1094 constitute an ABC transmembrane type-1 2 domain; it reads LGSLCAAIIG…IFNYSADFSS (298 aa). The helical transmembrane segment at 800 to 820 threads the bilayer; sequence LCAAIIGAVYPVYAILFGTAI. The N-linked (GlcNAc...) asparagine glycan is linked to N827. A helical transmembrane segment spans residues 848–868; sequence ISSGSFFIVAVGCAFISFYHV. N903 carries N-linked (GlcNAc...) asparagine glycosylation. The next 2 helical transmembrane spans lie at 911–931 and 951–973; these read SLSVLSQGIYGGVGPTLGSIV and LALVVIASTPLTITAGLLRLRVL. N-linked (GlcNAc...) asparagine glycosylation is present at N1020. Transmembrane regions (helical) follow at residues 1034–1054 and 1067–1087; these read VLFGLSQCVQLLVTALAFWYG and GFFTILISVVYGSVQAGNIFN. The ABC transporter 2 domain maps to 1136 to 1377; the sequence is IALKEVTFRY…DGLFALMARL (242 aa). 1171 to 1178 is an ATP binding site; it reads GGSGSGKS. N1324 carries an N-linked (GlcNAc...) asparagine glycan.

The protein belongs to the ABC transporter superfamily. ABCB family. Multidrug resistance exporter (TC 3.A.1.201) subfamily.

The protein localises to the cell membrane. Functionally, ABC-type transporter; part of the gene cluster that mediates the biosynthesis of the glycolipid biosurfactant ustilagic acid (UA). UA is a secreted cellobiose glycolipid that is toxic for many microorganisms and confers biocontrol activity to U.maydis. Export of UA is presumably catalyzed by the ABC transporter atr1. Atr1 appears to be quite unspecific, as many of the UA derivatives produced by cluster mutant strains are readily exported. The sequence is that of ABC-type transporter atr1 from Mycosarcoma maydis (Corn smut fungus).